A 220-amino-acid polypeptide reads, in one-letter code: Protein GrpE (220 aa).

The tract at residues 1 to 22 (MSDEKNKFTDASFENCDLKNPS) is disordered.

This sequence belongs to the GrpE family. As to quaternary structure, homodimer.

It localises to the cytoplasm. In terms of biological role, participates actively in the response to hyperosmotic and heat shock by preventing the aggregation of stress-denatured proteins, in association with DnaK and GrpE. It is the nucleotide exchange factor for DnaK and may function as a thermosensor. Unfolded proteins bind initially to DnaJ; upon interaction with the DnaJ-bound protein, DnaK hydrolyzes its bound ATP, resulting in the formation of a stable complex. GrpE releases ADP from DnaK; ATP binding to DnaK triggers the release of the substrate protein, thus completing the reaction cycle. Several rounds of ATP-dependent interactions between DnaJ, DnaK and GrpE are required for fully efficient folding. The polypeptide is Protein GrpE (Bartonella henselae (strain ATCC 49882 / DSM 28221 / CCUG 30454 / Houston 1) (Rochalimaea henselae)).